The sequence spans 224 residues: 7-cyano-7-deazaguanine synthase (224 aa).

Residue 10 to 20 (LSGGLDSATVA) coordinates ATP. Zn(2+) contacts are provided by Cys189, Cys199, Cys202, and Cys205.

It belongs to the QueC family. It depends on Zn(2+) as a cofactor.

The catalysed reaction is 7-carboxy-7-deazaguanine + NH4(+) + ATP = 7-cyano-7-deazaguanine + ADP + phosphate + H2O + H(+). Its pathway is purine metabolism; 7-cyano-7-deazaguanine biosynthesis. Catalyzes the ATP-dependent conversion of 7-carboxy-7-deazaguanine (CDG) to 7-cyano-7-deazaguanine (preQ(0)). This is 7-cyano-7-deazaguanine synthase from Azotobacter vinelandii (strain DJ / ATCC BAA-1303).